The chain runs to 459 residues: Spermatogenesis-associated protein 1 (459 aa).

Over residues 193-205 the composition is skewed to basic and acidic residues; sequence LKELPNKNQEEAG. A disordered region spans residues 193-213; it reads LKELPNKNQEEAGGKATAEKS. Coiled coils occupy residues 287–374 and 400–453; these read TDIS…YKKL and LIIQ…KKII.

Interacts with IFT20.

Its subcellular location is the cytoplasmic vesicle. The protein resides in the secretory vesicle. It is found in the acrosome. In Homo sapiens (Human), this protein is Spermatogenesis-associated protein 1 (SPATA1).